The following is a 380-amino-acid chain: Enoyl-[acyl-carrier-protein] reductase, mitochondrial (380 aa).

The transit peptide at Met-1 to Met-9 directs the protein to the mitochondrion. Tyr-73 (proton donor) is an active-site residue. NADP(+)-binding positions include Asn-157, Thr-185–Val-188, Arg-208–Arg-210, Tyr-283–Met-286, and Tyr-308–Val-310. Phosphoserine is present on Ser-339. Lys-373 is a binding site for NADP(+).

This sequence belongs to the zinc-containing alcohol dehydrogenase family. Quinone oxidoreductase subfamily. As to quaternary structure, homodimer or in a complex with other proteins. Interacts with ARS1.

The protein localises to the mitochondrion matrix. It carries out the reaction a 2,3-saturated acyl-[ACP] + NADP(+) = a (2E)-enoyl-[ACP] + NADPH + H(+). The enzyme catalyses (2E,4E)-hexadienoyl-CoA + NADPH + H(+) = (4E)-hexenoyl-CoA + NADP(+). It catalyses the reaction (2E)-hexenoyl-CoA + NADPH + H(+) = hexanoyl-CoA + NADP(+). Functionally, catalyzes the NADPH-dependent reduction of trans-2-enoyl thioesters in mitochondrial fatty acid synthesis (fatty acid synthesis type II). Fatty acid chain elongation in mitochondria uses acyl carrier protein (ACP) as an acyl group carrier, but the enzyme accepts both ACP and CoA thioesters as substrates in vitro. Required for respiration and the maintenance of the mitochondrial compartment. The chain is Enoyl-[acyl-carrier-protein] reductase, mitochondrial (ETR1) from Saccharomyces cerevisiae (strain ATCC 204508 / S288c) (Baker's yeast).